The chain runs to 39 residues: Natriuretic peptide PaNP-d (39 aa).

Positions 1–8 (SGSKTAEI) are excised as a propeptide. The tract at residues 1-39 (SGSKTAEIDDGCFGLPLDPIGSTSGMGCRSVPKPIPGGS) is disordered. Residues cysteine 12 and cysteine 28 are joined by a disulfide bond.

Belongs to the natriuretic peptide family. As to expression, expressed by the venom gland.

It is found in the secreted. Functionally, snake venom natriuretic peptide that targets both NPR1 and NPR2. Exhibits hypotensive and vasodepressor activities. The sequence is that of Natriuretic peptide PaNP-d from Pseudechis australis (Mulga snake).